We begin with the raw amino-acid sequence, 353 residues long: Membrane lipoprotein TmpC (353 aa).

The first 20 residues, 1-20 (MREKWVRAFAGVFCAMLLIG), serve as a signal peptide directing secretion. Cysteine 21 is lipidated: N-palmitoyl cysteine. Cysteine 21 is lipidated: S-diacylglycerol cysteine. Position 47 (aspartate 47) interacts with guanosine. Position 47 (aspartate 47) interacts with inosine. Adenosine contacts are provided by residues 47 to 48 (DS) and phenylalanine 56. Positions 57, 128, 206, 232, 258, and 280 each coordinate guanosine. Residues asparagine 57 and aspartate 128 each coordinate inosine. Adenosine-binding residues include aspartate 128, phenylalanine 206, glycine 232, aspartate 258, and lysine 280. Positions 232, 258, and 280 each coordinate inosine.

It belongs to the BMP lipoprotein family. In terms of assembly, monomer.

It localises to the cell membrane. Functionally, binds purine nucleosides and may play a role in purine nucleoside uptake. May be part of an ABC-type nucleoside uptake system. Has highest affinity for guanosine, followed by inosine and adenosine. Has very low affinity for cytidine and does not bind thymidine. This chain is Membrane lipoprotein TmpC (tmpC), found in Treponema pallidum (strain Nichols).